A 157-amino-acid polypeptide reads, in one-letter code: Small ribosomal subunit protein uS7 (157 aa).

The protein belongs to the universal ribosomal protein uS7 family. Part of the 30S ribosomal subunit. Contacts proteins S9 and S11.

Functionally, one of the primary rRNA binding proteins, it binds directly to 16S rRNA where it nucleates assembly of the head domain of the 30S subunit. Is located at the subunit interface close to the decoding center, probably blocks exit of the E-site tRNA. The protein is Small ribosomal subunit protein uS7 of Chloroflexus aggregans (strain MD-66 / DSM 9485).